A 120-amino-acid polypeptide reads, in one-letter code: Large ribosomal subunit protein bL17 (120 aa).

It belongs to the bacterial ribosomal protein bL17 family. In terms of assembly, part of the 50S ribosomal subunit. Contacts protein L32.

The protein is Large ribosomal subunit protein bL17 of Anoxybacillus flavithermus (strain DSM 21510 / WK1).